The primary structure comprises 262 residues: 3-methyl-2-oxobutanoate hydroxymethyltransferase (262 aa).

Mg(2+) contacts are provided by aspartate 44 and aspartate 83. Residues 44–45 (DS), aspartate 83, and lysine 112 each bind 3-methyl-2-oxobutanoate. Glutamate 114 contacts Mg(2+). Glutamate 181 functions as the Proton acceptor in the catalytic mechanism.

This sequence belongs to the PanB family. Homodecamer; pentamer of dimers. Mg(2+) is required as a cofactor.

The protein localises to the cytoplasm. It carries out the reaction 3-methyl-2-oxobutanoate + (6R)-5,10-methylene-5,6,7,8-tetrahydrofolate + H2O = 2-dehydropantoate + (6S)-5,6,7,8-tetrahydrofolate. It functions in the pathway cofactor biosynthesis; (R)-pantothenate biosynthesis; (R)-pantoate from 3-methyl-2-oxobutanoate: step 1/2. Its function is as follows. Catalyzes the reversible reaction in which hydroxymethyl group from 5,10-methylenetetrahydrofolate is transferred onto alpha-ketoisovalerate to form ketopantoate. The sequence is that of 3-methyl-2-oxobutanoate hydroxymethyltransferase from Thiobacillus denitrificans (strain ATCC 25259 / T1).